Here is a 193-residue protein sequence, read N- to C-terminus: Xanthine phosphoribosyltransferase (193 aa).

Residues Leu-20 and Thr-27 each contribute to the xanthine site. 128-132 (ANGQA) lines the 5-phospho-alpha-D-ribose 1-diphosphate pocket. Xanthine is bound at residue Lys-156.

Belongs to the purine/pyrimidine phosphoribosyltransferase family. Xpt subfamily. As to quaternary structure, homodimer.

It localises to the cytoplasm. The enzyme catalyses XMP + diphosphate = xanthine + 5-phospho-alpha-D-ribose 1-diphosphate. It participates in purine metabolism; XMP biosynthesis via salvage pathway; XMP from xanthine: step 1/1. In terms of biological role, converts the preformed base xanthine, a product of nucleic acid breakdown, to xanthosine 5'-monophosphate (XMP), so it can be reused for RNA or DNA synthesis. The protein is Xanthine phosphoribosyltransferase of Streptococcus pneumoniae (strain P1031).